Here is a 341-residue protein sequence, read N- to C-terminus: Spindle assembly checkpoint protein BUB3 (341 aa).

7 WD repeats span residues 9–48, 54–96, 97–137, 144–185, 191–233, 249–288, and 292–329; these read APKD…KNVD, RYKH…QALT, NNEA…DGVI, SNNT…DDNG, GLKY…YNSS, NLAY…KIKN, and FNED…IELN.

This sequence belongs to the WD repeat BUB3 family. In terms of assembly, component of the mitotic checkpoint complex (MCC) which consists of MAD2, MAD3, BUB3 and CDC20. Part of complex consisting of MAD1, BUB1 and BUB3 after activation of spindle checkpoint. Part of the BUB1-BUB3 complex, composed of BUB1 and BUB3. Interacts with SPC105 (via phosphorylated MELT motifs); the interaction is direct and occurs when part of the BUB1-BUB3 complex. Interacts with MAD3; the interaction is direct. In terms of processing, phosphorylated by BUB1.

The protein resides in the nucleus. It is found in the chromosome. The protein localises to the centromere. Its subcellular location is the kinetochore. Its function is as follows. Involved in mitotic spindle assembly checkpoint signaling, a process that delays anaphase until chromosomes are bioriented on the spindle, and in the repair of incorrect mitotic kinetochore-spindle microtubule attachments. Component of the mitotic checkpoint complex (MCC) which inhibits the ubiquitin ligase activity of the anaphase promoting complex/cyclosome (APC/C) by preventing its activation by CDC20. This chain is Spindle assembly checkpoint protein BUB3 (BUB3), found in Saccharomyces cerevisiae (strain ATCC 204508 / S288c) (Baker's yeast).